A 274-amino-acid chain; its full sequence is Ribosomal RNA small subunit methyltransferase A (274 aa).

S-adenosyl-L-methionine contacts are provided by His15, Leu17, Gly42, Glu64, Asp89, and Asn109.

Belongs to the class I-like SAM-binding methyltransferase superfamily. rRNA adenine N(6)-methyltransferase family. RsmA subfamily.

The protein localises to the cytoplasm. It catalyses the reaction adenosine(1518)/adenosine(1519) in 16S rRNA + 4 S-adenosyl-L-methionine = N(6)-dimethyladenosine(1518)/N(6)-dimethyladenosine(1519) in 16S rRNA + 4 S-adenosyl-L-homocysteine + 4 H(+). In terms of biological role, specifically dimethylates two adjacent adenosines (A1518 and A1519) in the loop of a conserved hairpin near the 3'-end of 16S rRNA in the 30S particle. May play a critical role in biogenesis of 30S subunits. The sequence is that of Ribosomal RNA small subunit methyltransferase A from Synechococcus sp. (strain RCC307).